Reading from the N-terminus, the 329-residue chain is ATP phosphoribosyltransferase regulatory subunit (329 aa).

Belongs to the class-II aminoacyl-tRNA synthetase family. HisZ subfamily. As to quaternary structure, heteromultimer composed of HisG and HisZ subunits.

It is found in the cytoplasm. It functions in the pathway amino-acid biosynthesis; L-histidine biosynthesis; L-histidine from 5-phospho-alpha-D-ribose 1-diphosphate: step 1/9. Its function is as follows. Required for the first step of histidine biosynthesis. May allow the feedback regulation of ATP phosphoribosyltransferase activity by histidine. The sequence is that of ATP phosphoribosyltransferase regulatory subunit from Streptococcus gordonii (strain Challis / ATCC 35105 / BCRC 15272 / CH1 / DL1 / V288).